The sequence spans 82 residues: Turripeptide Gsg9.1 (82 aa).

Positions methionine 1 to glycine 23 are cleaved as a signal peptide. Residues leucine 24 to arginine 46 constitute a propeptide that is removed on maturation. A 4-hydroxyproline mark is found at proline 49 and proline 50. 3 disulfide bridges follow: cysteine 53–cysteine 68, cysteine 58–cysteine 72, and cysteine 64–cysteine 79. A 4-carboxyglutamate mark is found at glutamate 60 and glutamate 63.

This sequence belongs to the Pg turripeptide superfamily. Expressed by the venom duct.

It localises to the secreted. This Gemmula sogodensis (Gem-turris) protein is Turripeptide Gsg9.1.